The primary structure comprises 425 residues: 5-hydroxytryptamine receptor 7 (425 aa).

Over Met1 to Val72 the chain is Extracellular. 3 N-linked (GlcNAc...) asparagine glycosylation sites follow: Asn14, Asn41, and Asn51. The chain crosses the membrane as a helical span at residues Ile73–Ile97. At Val98 to Tyr107 the chain is on the cytoplasmic side. The helical transmembrane segment at Leu108–Ile129 threads the bilayer. At Thr130 to Lys141 the chain is on the extracellular side. A helical membrane pass occupies residues Val142–Val167. A disulfide bridge connects residues Cys144 and Cys220. A serotonin-binding site is contributed by Asp151. Over Asp168–Leu187 the chain is Cytoplasmic. Residues Met188–Phe208 form a helical membrane-spanning segment. Residues Gly209–Phe226 are Extracellular-facing. A helical transmembrane segment spans residues Gly227 to Gln249. Residues Arg250 to Ala322 are Cytoplasmic-facing. A helical transmembrane segment spans residues Arg323 to Phe348. Residues Ile349–Leu359 lie on the Extracellular side of the membrane. Residues Arg360–Phe383 form a helical membrane-spanning segment. Topologically, residues Asn384–Leu425 are cytoplasmic. The S-palmitoyl cysteine moiety is linked to residue Cys397.

This sequence belongs to the G-protein coupled receptor 1 family.

It is found in the cell membrane. G-protein coupled receptor for 5-hydroxytryptamine (serotonin), a biogenic hormone that functions as a neurotransmitter, a hormone and a mitogen. Ligand binding causes a conformation change that triggers signaling via guanine nucleotide-binding proteins (G proteins) and modulates the activity of downstream effectors. HTR7 is coupled to G(s) G alpha proteins and mediates activation of adenylate cyclase activity. This chain is 5-hydroxytryptamine receptor 7 (htr7), found in Xenopus laevis (African clawed frog).